The primary structure comprises 204 residues: Holliday junction branch migration complex subunit RuvA (204 aa).

A domain I region spans residues 1–64 (MIARLRGTLL…EDGQTLFGFR (64 aa)). The domain II stretch occupies residues 65–143 (TRAERDLFRR…GVGGGSTAAP (79 aa)). Residues 144-153 (AAGADHPTGE) are flexible linker. A domain III region spans residues 153-204 (ENDPVSEAIEGLVALGYKPPEAARMARNAAEPELGCEAIIRRALQRAVPRGG).

It belongs to the RuvA family. Homotetramer. Forms an RuvA(8)-RuvB(12)-Holliday junction (HJ) complex. HJ DNA is sandwiched between 2 RuvA tetramers; dsDNA enters through RuvA and exits via RuvB. An RuvB hexamer assembles on each DNA strand where it exits the tetramer. Each RuvB hexamer is contacted by two RuvA subunits (via domain III) on 2 adjacent RuvB subunits; this complex drives branch migration. In the full resolvosome a probable DNA-RuvA(4)-RuvB(12)-RuvC(2) complex forms which resolves the HJ.

The protein localises to the cytoplasm. The RuvA-RuvB-RuvC complex processes Holliday junction (HJ) DNA during genetic recombination and DNA repair, while the RuvA-RuvB complex plays an important role in the rescue of blocked DNA replication forks via replication fork reversal (RFR). RuvA specifically binds to HJ cruciform DNA, conferring on it an open structure. The RuvB hexamer acts as an ATP-dependent pump, pulling dsDNA into and through the RuvAB complex. HJ branch migration allows RuvC to scan DNA until it finds its consensus sequence, where it cleaves and resolves the cruciform DNA. This chain is Holliday junction branch migration complex subunit RuvA, found in Halorhodospira halophila (strain DSM 244 / SL1) (Ectothiorhodospira halophila (strain DSM 244 / SL1)).